The sequence spans 206 residues: Large ribosomal subunit protein eL13x (206 aa).

The segment at 186-206 (NARHAGARAKRAAEAEKEEKK) is disordered. Positions 196 to 206 (RAAEAEKEEKK) are enriched in basic and acidic residues.

It belongs to the eukaryotic ribosomal protein eL13 family.

This Arabidopsis thaliana (Mouse-ear cress) protein is Large ribosomal subunit protein eL13x (RPL13D).